The primary structure comprises 83 residues: Exodeoxyribonuclease 7 small subunit (83 aa).

It belongs to the XseB family. Heterooligomer composed of large and small subunits.

It is found in the cytoplasm. It catalyses the reaction Exonucleolytic cleavage in either 5'- to 3'- or 3'- to 5'-direction to yield nucleoside 5'-phosphates.. Its function is as follows. Bidirectionally degrades single-stranded DNA into large acid-insoluble oligonucleotides, which are then degraded further into small acid-soluble oligonucleotides. The protein is Exodeoxyribonuclease 7 small subunit of Rhizobium etli (strain ATCC 51251 / DSM 11541 / JCM 21823 / NBRC 15573 / CFN 42).